Here is an 872-residue protein sequence, read N- to C-terminus: Alanine--tRNA ligase (872 aa).

4 residues coordinate Zn(2+): H567, H571, C669, and H673.

This sequence belongs to the class-II aminoacyl-tRNA synthetase family. Zn(2+) is required as a cofactor.

The protein resides in the cytoplasm. The catalysed reaction is tRNA(Ala) + L-alanine + ATP = L-alanyl-tRNA(Ala) + AMP + diphosphate. In terms of biological role, catalyzes the attachment of alanine to tRNA(Ala) in a two-step reaction: alanine is first activated by ATP to form Ala-AMP and then transferred to the acceptor end of tRNA(Ala). Also edits incorrectly charged Ser-tRNA(Ala) and Gly-tRNA(Ala) via its editing domain. This Streptococcus suis (strain 98HAH33) protein is Alanine--tRNA ligase.